The following is a 395-amino-acid chain: Tyrosine--tRNA ligase (395 aa).

Residues 42–51 (PTAPDIHLGH) carry the 'HIGH' region motif. The 'KMSKS' region signature appears at 226-230 (KMSKS). An ATP-binding site is contributed by lysine 229. In terms of domain architecture, S4 RNA-binding spans 334-394 (IGLANLLKEA…GKRKFARVTV (61 aa)).

It belongs to the class-I aminoacyl-tRNA synthetase family. TyrS type 2 subfamily. As to quaternary structure, homodimer.

The protein resides in the cytoplasm. It carries out the reaction tRNA(Tyr) + L-tyrosine + ATP = L-tyrosyl-tRNA(Tyr) + AMP + diphosphate + H(+). Its function is as follows. Catalyzes the attachment of tyrosine to tRNA(Tyr) in a two-step reaction: tyrosine is first activated by ATP to form Tyr-AMP and then transferred to the acceptor end of tRNA(Tyr). The polypeptide is Tyrosine--tRNA ligase (Mannheimia succiniciproducens (strain KCTC 0769BP / MBEL55E)).